The primary structure comprises 184 residues: ATP synthase subunit b, chloroplastic (184 aa).

A helical transmembrane segment spans residues 27–49 (LATNPINLSVVLGVLIFFGKGVL).

This sequence belongs to the ATPase B chain family. In terms of assembly, F-type ATPases have 2 components, F(1) - the catalytic core - and F(0) - the membrane proton channel. F(1) has five subunits: alpha(3), beta(3), gamma(1), delta(1), epsilon(1). F(0) has four main subunits: a(1), b(1), b'(1) and c(10-14). The alpha and beta chains form an alternating ring which encloses part of the gamma chain. F(1) is attached to F(0) by a central stalk formed by the gamma and epsilon chains, while a peripheral stalk is formed by the delta, b and b' chains.

The protein resides in the plastid. It is found in the chloroplast thylakoid membrane. Its function is as follows. F(1)F(0) ATP synthase produces ATP from ADP in the presence of a proton or sodium gradient. F-type ATPases consist of two structural domains, F(1) containing the extramembraneous catalytic core and F(0) containing the membrane proton channel, linked together by a central stalk and a peripheral stalk. During catalysis, ATP synthesis in the catalytic domain of F(1) is coupled via a rotary mechanism of the central stalk subunits to proton translocation. Functionally, component of the F(0) channel, it forms part of the peripheral stalk, linking F(1) to F(0). The chain is ATP synthase subunit b, chloroplastic from Carica papaya (Papaya).